The chain runs to 538 residues: Lipid scramblase CLPTM1L (538 aa).

The Cytoplasmic segment spans residues 1–10 (MWSGRSSFTS). A helical transmembrane segment spans residues 11–31 (LVVGVFVVYVVHTCWVMYGIV). The Extracellular segment spans residues 32–284 (YTRPCSGHGR…VKGIFVDTNL (253 aa)). Asn91 and Asn101 each carry an N-linked (GlcNAc...) asparagine glycan. Residues 285–305 (YFLALTFFVAAFHLLFDFLAF) form a helical membrane-spanning segment. Residues 306-324 (KNDISFWKKKKSMIGMSTK) are Cytoplasmic-facing. The helical transmembrane segment at 325-341 (AVLWRCFSTVVIFLFLL) threads the bilayer. Residues 342–402 (DEQTSLPVLV…TEEYDAQAMK (61 aa)) are Extracellular-facing. A helical membrane pass occupies residues 403–423 (YLSYLLYPLCIGGAIYSLLNI). At 424–428 (KYKSW) the chain is on the cytoplasmic side. The chain crosses the membrane as a helical span at residues 429-449 (YSWLINSFVNGVYAFGFLFML). The Extracellular segment spans residues 450–538 (PQLFVNYKMK…DTPQRKPHTD (89 aa)).

The protein belongs to the CLPTM1 family.

It is found in the endoplasmic reticulum membrane. The catalysed reaction is a 6-(alpha-D-glucosaminyl)-1-(1,2-diacyl-sn-glycero-3-phospho)-1D-myo-inositol(in) = a 6-(alpha-D-glucosaminyl)-1-(1,2-diacyl-sn-glycero-3-phospho)-1D-myo-inositol(out). It carries out the reaction 6-(alpha-D-glucosaminyl)-(1-octadecanoyl,2-(9Z)-octadecenoyl-sn-glycero-3-phospho)-1D-myo-inositol(in) = 6-(alpha-D-glucosaminyl)-(1-octadecanoyl,2-(9Z)-octadecenoyl-sn-glycero-3-phospho)-1D-myo-inositol(out). The enzyme catalyses a 1,2-diacyl-sn-glycero-3-phospho-(1D-myo-inositol)(in) = a 1,2-diacyl-sn-glycero-3-phospho-(1D-myo-inositol)(out). It catalyses the reaction a 1,2-diacyl-sn-glycero-3-phosphocholine(in) = a 1,2-diacyl-sn-glycero-3-phosphocholine(out). The catalysed reaction is a 1,2-diacyl-sn-glycero-3-phosphoethanolamine(in) = a 1,2-diacyl-sn-glycero-3-phosphoethanolamine(out). Scramblase that mediates the translocation of glucosaminylphosphatidylinositol (alpha-D-GlcN-(1-6)-(1,2-diacyl-sn-glycero-3-phospho)-1D-myo-inositol, GlcN-PI) across the endoplasmic reticulum (ER) membrane, from the cytosolic leaflet to the luminal leaflet of the ER membrane, where it participates in the biosynthesis of glycosylphosphatidylinositol (GPI). GPI is a lipid glycoconjugate involved in post-translational modification of proteins. Can also translocate 1,2-diacyl-sn-glycero-3-phospho-(1D-myo-inositol) (phosphatidylinositol or PI), as well as several other phospholipids (1,2-diacyl-sn-glycero-3-phosphocholine, 1,2-diacyl-sn-glycero-3-phosphoethanolamine), and N-acetylglucosaminylphosphatidylinositol (GlcNAc-PI) in vitro. The chain is Lipid scramblase CLPTM1L (CLPTM1L) from Bos taurus (Bovine).